The following is a 537-amino-acid chain: Ataxin-10 homolog (537 aa).

The protein belongs to the ataxin-10 family.

The protein localises to the cytoplasm. Functionally, may play a role in the regulation of cytokinesis. This is Ataxin-10 homolog (CTR86) from Kluyveromyces lactis (strain ATCC 8585 / CBS 2359 / DSM 70799 / NBRC 1267 / NRRL Y-1140 / WM37) (Yeast).